A 329-amino-acid polypeptide reads, in one-letter code: MATIHFTKVHGSQNDFFLVDEEENQIMDWSDAKRADFAIKLCDREHSLGGADGILYVTKSNEAGPIGQMRVVNSDGSIASMCGNGLRTVARYLLEKHALTEAKVETMKAILDVKKATSLGFDIPTYQVEISPVKFNAESLPMNVGVEKLFNQVVPELDSELAFSAVSVPNPHLITFVDQTVLDSDKQETLASYLNSENPYFPDGVNVSFVKRLSDDAIYVRTFERGVGFTNACGTAMSACSLIKKMLDKDTFETPLNVYNDGGRVQVTAKKDEAGEISLQLIGNATFVSTGSVSYERGTVTELTNEATPEQAQYQELVKEVKQFLKTTE.

Substrate contacts are provided by asparagine 14 and asparagine 73. Cysteine 82 (proton donor) is an active-site residue. Substrate-binding positions include 83 to 84 (GN), asparagine 170, asparagine 206, and 224 to 225 (ER). The Proton acceptor role is filled by cysteine 233. 234–235 (GT) lines the substrate pocket.

It belongs to the diaminopimelate epimerase family. Homodimer.

Its subcellular location is the cytoplasm. The catalysed reaction is (2S,6S)-2,6-diaminopimelate = meso-2,6-diaminopimelate. It participates in amino-acid biosynthesis; L-lysine biosynthesis via DAP pathway; DL-2,6-diaminopimelate from LL-2,6-diaminopimelate: step 1/1. Functionally, catalyzes the stereoinversion of LL-2,6-diaminopimelate (L,L-DAP) to meso-diaminopimelate (meso-DAP), a precursor of L-lysine and an essential component of the bacterial peptidoglycan. The protein is Diaminopimelate epimerase of Listeria innocua serovar 6a (strain ATCC BAA-680 / CLIP 11262).